The primary structure comprises 170 residues: Peptide deformylase (170 aa).

Residues cysteine 91 and histidine 133 each coordinate Fe cation. Glutamate 134 is a catalytic residue. Histidine 137 serves as a coordination point for Fe cation.

The protein belongs to the polypeptide deformylase family. Fe(2+) serves as cofactor.

The catalysed reaction is N-terminal N-formyl-L-methionyl-[peptide] + H2O = N-terminal L-methionyl-[peptide] + formate. In terms of biological role, removes the formyl group from the N-terminal Met of newly synthesized proteins. Requires at least a dipeptide for an efficient rate of reaction. N-terminal L-methionine is a prerequisite for activity but the enzyme has broad specificity at other positions. This Yersinia pseudotuberculosis serotype O:1b (strain IP 31758) protein is Peptide deformylase.